The following is an 81-amino-acid chain: MGVNFNICLLLLLVATISSQPLKATEKDDSTDENPFGIYRRGSQCAVYGGRCIPTSVRCPPNTFQCDLSGCSWSERCCCHL.

The first 19 residues, Met1–Ser19, serve as a signal peptide directing secretion. Residues Gln20–Tyr39 constitute a propeptide that is removed on maturation.

It belongs to the Cnidaria small cysteine-rich protein (SCRiP) family. alpha subfamily. The basic myotoxic domain of rattlesnake crotamine toxins (with 6 Cys residues) has been detected in this protein. However, this protein contains 2 additional Cys at the C-terminal region. Hence, this protein may contain 4 disulfide bonds instead of the 3 suggested by the myotoxin domain.

Its subcellular location is the secreted. It localises to the nematocyst. In terms of biological role, induces neurotoxic symptoms on zebrafish. Has also been claimed to be implied in calcification, but tests on homolog proteins suggest that proteins of this family have a neurotoxic function and not a calcification function. In Montipora capitata (Rice coral), this protein is Small cysteine-rich protein 1 2.